The sequence spans 340 residues: N-acetyl-gamma-glutamyl-phosphate reductase (340 aa).

Cys-147 is an active-site residue.

Belongs to the NAGSA dehydrogenase family. Type 1 subfamily.

Its subcellular location is the cytoplasm. The catalysed reaction is N-acetyl-L-glutamate 5-semialdehyde + phosphate + NADP(+) = N-acetyl-L-glutamyl 5-phosphate + NADPH + H(+). The protein operates within amino-acid biosynthesis; L-arginine biosynthesis; N(2)-acetyl-L-ornithine from L-glutamate: step 3/4. In terms of biological role, catalyzes the NADPH-dependent reduction of N-acetyl-5-glutamyl phosphate to yield N-acetyl-L-glutamate 5-semialdehyde. The sequence is that of N-acetyl-gamma-glutamyl-phosphate reductase from Lactococcus lactis subsp. lactis (strain IL1403) (Streptococcus lactis).